The primary structure comprises 688 residues: GTPase IMAP family member 8 (688 aa).

Residues 1–14 (MATSSHQGAAAGSQ) are compositionally biased toward low complexity. A disordered region spans residues 1 to 42 (MATSSHQGAAAGSQAEHRSCEASVGQGERPSASQGQEGNFKQ). Polar residues predominate over residues 31-42 (SASQGQEGNFKQ). AIG1-type G domains follow at residues 46 to 247 (TSTL…MESS), 282 to 472 (MPEL…VIRE), and 473 to 677 (KELL…GQLK). Residues 55 to 62 (GKQGAGKS) are G1. GTP contacts are provided by residues 55–63 (GKQGAGKSA) and S76. The segment at 82 to 86 (MVTDR) is G2. Residues 103-106 (DTPD) are G3. A G4 region spans residues 172–175 (TRED). GTP-binding positions include 173-175 (RED) and N209. The G5 stretch occupies residues 208 to 210 (NNK).

This sequence belongs to the TRAFAC class TrmE-Era-EngA-EngB-Septin-like GTPase superfamily. AIG1/Toc34/Toc159-like paraseptin GTPase family. IAN subfamily. Abundantly expressed in the thymus (in thymocytes), spleen (in splenocytes), lymph node, followed by bone marrow and lung.

It localises to the endoplasmic reticulum. The protein resides in the golgi apparatus. It is found in the mitochondrion. The protein localises to the cytoplasm. Its subcellular location is the cytosol. In terms of biological role, exerts an anti-apoptotic effect in the immune system and is involved in responses to infections. This is GTPase IMAP family member 8 (Gimap8) from Mus musculus (Mouse).